The chain runs to 432 residues: MKIGVVSLGCAKNLVDSEILLGKLKGAGVELTPNPEEADVIIVNTCGFIEPAKLESIETILEFAESGKEVIVMGCLVERYKEELEKEIPEVKAYFGTESWNEILNYLGLKEKKEIKRILSTPRSYAYLKIAEGCNRLCSFCAIPKIRGRHRSRKIEEIVDEAKFLADQGVKEICVVSQDTTYYGKDLYKEYKLVELLEGLEKVEGIKWIRLLYLYPTEVHEDLIDYVANSEKVLPYFDVPLQHVSDRVLKDMRRGYDGKFVRNLIENIRKKIENAVFRTTFIVGFPTESEEDFKELKKFVEEGHFHWLGVFTYSPEEGTHAYPLGDPIPREVKEERREELMAIQRGITRKKNEEFLGKEIEVLIDGYEEEFSFVPKGRAYFQAPEVDGVVYVESSRDLKSGDILKVKVTQVADYDLAGRDTEALDLIFSSEE.

One can recognise an MTTase N-terminal domain in the interval 1 to 112 (MKIGVVSLGC…ILNYLGLKEK (112 aa)). Residues C10, C46, C75, C134, C138, and C141 each contribute to the [4Fe-4S] cluster site. Positions 120–350 (STPRSYAYLK…MAIQRGITRK (231 aa)) constitute a Radical SAM core domain. Residues 353-422 (EEFLGKEIEV…DYDLAGRDTE (70 aa)) form the TRAM domain.

Belongs to the methylthiotransferase family. RimO subfamily. [4Fe-4S] cluster is required as a cofactor.

Its subcellular location is the cytoplasm. It carries out the reaction L-aspartate(89)-[ribosomal protein uS12]-hydrogen + (sulfur carrier)-SH + AH2 + 2 S-adenosyl-L-methionine = 3-methylsulfanyl-L-aspartate(89)-[ribosomal protein uS12]-hydrogen + (sulfur carrier)-H + 5'-deoxyadenosine + L-methionine + A + S-adenosyl-L-homocysteine + 2 H(+). Its function is as follows. Catalyzes the methylthiolation of an aspartic acid residue of ribosomal protein uS12. The sequence is that of Ribosomal protein uS12 methylthiotransferase RimO from Aquifex aeolicus (strain VF5).